The primary structure comprises 199 residues: Cytochrome c oxidase subunit 2 (199 aa).

Residues Ala-1–Met-13 form a helical membrane-spanning segment. Residues Leu-14–Gln-26 are Mitochondrial matrix-facing. Residues Glu-27–Met-54 traverse the membrane as a helical segment. Over Asp-55–Leu-199 the chain is Mitochondrial intermembrane. Residues His-128, Cys-163, Glu-165, Cys-167, His-171, and Met-174 each contribute to the Cu cation site. Mg(2+) is bound at residue Glu-165.

The protein belongs to the cytochrome c oxidase subunit 2 family. As to quaternary structure, component of the cytochrome c oxidase (complex IV, CIV), a multisubunit enzyme composed of 14 subunits. The complex is composed of a catalytic core of 3 subunits MT-CO1, MT-CO2 and MT-CO3, encoded in the mitochondrial DNA, and 11 supernumerary subunits COX4I, COX5A, COX5B, COX6A, COX6B, COX6C, COX7A, COX7B, COX7C, COX8 and NDUFA4, which are encoded in the nuclear genome. The complex exists as a monomer or a dimer and forms supercomplexes (SCs) in the inner mitochondrial membrane with NADH-ubiquinone oxidoreductase (complex I, CI) and ubiquinol-cytochrome c oxidoreductase (cytochrome b-c1 complex, complex III, CIII), resulting in different assemblies (supercomplex SCI(1)III(2)IV(1) and megacomplex MCI(2)III(2)IV(2)). Found in a complex with TMEM177, COA6, COX18, COX20, SCO1 and SCO2. Interacts with TMEM177 in a COX20-dependent manner. Interacts with COX20. Interacts with COX16. Cu cation is required as a cofactor.

Its subcellular location is the mitochondrion inner membrane. It carries out the reaction 4 Fe(II)-[cytochrome c] + O2 + 8 H(+)(in) = 4 Fe(III)-[cytochrome c] + 2 H2O + 4 H(+)(out). Component of the cytochrome c oxidase, the last enzyme in the mitochondrial electron transport chain which drives oxidative phosphorylation. The respiratory chain contains 3 multisubunit complexes succinate dehydrogenase (complex II, CII), ubiquinol-cytochrome c oxidoreductase (cytochrome b-c1 complex, complex III, CIII) and cytochrome c oxidase (complex IV, CIV), that cooperate to transfer electrons derived from NADH and succinate to molecular oxygen, creating an electrochemical gradient over the inner membrane that drives transmembrane transport and the ATP synthase. Cytochrome c oxidase is the component of the respiratory chain that catalyzes the reduction of oxygen to water. Electrons originating from reduced cytochrome c in the intermembrane space (IMS) are transferred via the dinuclear copper A center (CU(A)) of subunit 2 and heme A of subunit 1 to the active site in subunit 1, a binuclear center (BNC) formed by heme A3 and copper B (CU(B)). The BNC reduces molecular oxygen to 2 water molecules using 4 electrons from cytochrome c in the IMS and 4 protons from the mitochondrial matrix. This chain is Cytochrome c oxidase subunit 2 (MT-CO2), found in Rhea americana (Greater rhea).